The chain runs to 205 residues: Protein phosphatase inhibitor 2 family member C (205 aa).

Disordered stretches follow at residues 1 to 51 and 70 to 114; these read MSAS…DESS and EPGT…DHSC. Residues 12–17 form a required for binding PPP1CC region; that stretch reads KGILKN. Residues 19–34 show a composition bias toward low complexity; that stretch reads SSSGSSVATSGQQSGG. The tract at residues 43–55 is required for binding PPP1CC; sequence KSQKWDESSILAT. Residues 84–102 show a composition bias toward basic and acidic residues; sequence DSVRDVEGEDSVRGVEGKE. The required for binding PPP1CC catalytic center, displacing metal ions and inhibition of PPP1CC catalytic activity stretch occupies residues 147-150; the sequence is HYNE. The disordered stretch occupies residues 165–205; that stretch reads LQSEDDENEERPQATNEEKTAAEESEEAPLSGGLQTQSCDP. Over residues 174–186 the composition is skewed to basic and acidic residues; that stretch reads ERPQATNEEKTAA.

This sequence belongs to the protein phosphatase inhibitor 2 family.

Functions as a protein phosphatase inhibitor. It inhibits activity of the catalytic subunit of PP1 and weakly inhibits the activity of myosin-associated phosphates. The chain is Protein phosphatase inhibitor 2 family member C (PPP1R2C) from Macaca fascicularis (Crab-eating macaque).